The primary structure comprises 78 residues: MTKSIISAFFIILILGMMVNEIEGQQQQQRCEEALTEIDCGAGNCNALCLQKRKGLGRCVQRTPCDKLKCMCYYPCSS.

A signal peptide spans 1–24; that stretch reads MTKSIISAFFIILILGMMVNEIEG. Cystine bridges form between Cys31–Cys76, Cys40–Cys59, Cys45–Cys70, and Cys49–Cys72.

This sequence belongs to the DEFL family.

It localises to the secreted. The sequence is that of Defensin-like protein 141 (LCR3) from Arabidopsis thaliana (Mouse-ear cress).